Consider the following 120-residue polypeptide: MASRKEALARRANRVRRHIKSVANGRPRLSVHRSSKNIYAQIIDDVAGKTLASASTLEKDLRGSLKTGADTAAAAAVGKLVAERASKAGVSEVVFDRGAFIYHGRIKALAEAAREGGLTF.

Belongs to the universal ribosomal protein uL18 family. As to quaternary structure, part of the 50S ribosomal subunit; part of the 5S rRNA/L5/L18/L25 subcomplex. Contacts the 5S and 23S rRNAs.

Its function is as follows. This is one of the proteins that bind and probably mediate the attachment of the 5S RNA into the large ribosomal subunit, where it forms part of the central protuberance. The polypeptide is Large ribosomal subunit protein uL18 (Rhizobium etli (strain CIAT 652)).